The chain runs to 367 residues: Protein-glutamate methylesterase/protein-glutamine glutaminase 2 (367 aa).

The 118-residue stretch at 3 to 120 (SVVVVDDSAF…SLDIVRIEND (118 aa)) folds into the Response regulatory domain. D54 carries the post-translational modification 4-aspartylphosphate. The segment at 132-174 (RMLRTPRPVRPAPTASAPAQTAQVASAAPATAPSRPAMPATRA) is disordered. Positions 143-174 (APTASAPAQTAQVASAAPATAPSRPAMPATRA) are enriched in low complexity. In terms of domain architecture, CheB-type methylesterase spans 175-367 (SRPVRDVVAI…AAAIMNGLYK (193 aa)). Catalysis depends on residues S187, H214, and D310.

This sequence belongs to the CheB family. In terms of processing, phosphorylated by CheA. Phosphorylation of the N-terminal regulatory domain activates the methylesterase activity.

Its subcellular location is the cytoplasm. It catalyses the reaction [protein]-L-glutamate 5-O-methyl ester + H2O = L-glutamyl-[protein] + methanol + H(+). The enzyme catalyses L-glutaminyl-[protein] + H2O = L-glutamyl-[protein] + NH4(+). In terms of biological role, involved in chemotaxis. Part of a chemotaxis signal transduction system that modulates chemotaxis in response to various stimuli. Catalyzes the demethylation of specific methylglutamate residues introduced into the chemoreceptors (methyl-accepting chemotaxis proteins or MCP) by CheR. Also mediates the irreversible deamidation of specific glutamine residues to glutamic acid. The polypeptide is Protein-glutamate methylesterase/protein-glutamine glutaminase 2 (Nitratidesulfovibrio vulgaris (strain ATCC 29579 / DSM 644 / CCUG 34227 / NCIMB 8303 / VKM B-1760 / Hildenborough) (Desulfovibrio vulgaris)).